A 234-amino-acid polypeptide reads, in one-letter code: Glycoprotein BDLF3 (234 aa).

An N-terminal signal peptide occupies residues 1-28 (MAHARDKAGAVMAMILICETSLIWTSSG). The tract at residues 29-62 (SSTASAGNVTGTTAVTTPSPSASGPSTNQSTTLT) is disordered. N-linked (GlcNAc...) asparagine; by host glycosylation is found at N36, N56, N77, N96, N101, N110, N127, N144, and N159. Positions 116–138 (AGTGTSTGVTSNVTTRSSSTTSA) are disordered. The helical transmembrane segment at 187 to 207 (LVFVGLTFLMLILIFAAGLMM) threads the bilayer.

It belongs to the Epstein-Barr virus BDLF3 protein family.

The protein resides in the membrane. The polypeptide is Glycoprotein BDLF3 (Homo sapiens (Human)).